The chain runs to 310 residues: Membrane protein insertase YidC 2 (310 aa).

Residues 1 to 23 form the signal peptide; it reads MKKTLKRILFSSLSLSMLLLLTG. Residue Cys-24 is the site of N-palmitoyl cysteine attachment. A lipid anchor (S-diacylglycerol cysteine) is attached at Cys-24. Transmembrane regions (helical) follow at residues 33–53, 58–78, 135–155, 180–200, and 219–239; these read PYGV…TYFA, LGFG…ILPL, FGGI…AIFF, LTVI…QGVP, and VFMS…GGIF. A disordered region spans residues 266-310; the sequence is NPPKAYKANNARKDVTNSTKATESNQAIITSKKTNRNAGKQKRRG. The span at 281–297 shows a compositional bias: polar residues; the sequence is TNSTKATESNQAIITSK. Residues 298-310 are compositionally biased toward basic residues; sequence KTNRNAGKQKRRG.

It belongs to the OXA1/ALB3/YidC family. Type 2 subfamily.

It is found in the cell membrane. Required for the insertion and/or proper folding and/or complex formation of integral membrane proteins into the membrane. Involved in integration of membrane proteins that insert both dependently and independently of the Sec translocase complex, as well as at least some lipoproteins. The polypeptide is Membrane protein insertase YidC 2 (Streptococcus agalactiae serotype V (strain ATCC BAA-611 / 2603 V/R)).